We begin with the raw amino-acid sequence, 484 residues long: Probable cytochrome P450 508A1 (484 aa).

A helical transmembrane segment spans residues 1–21 (MALFEIIISLFVVYIIHNAIS). Position 428 (Cys-428) interacts with heme.

Belongs to the cytochrome P450 family. The cofactor is heme.

It is found in the membrane. In Dictyostelium discoideum (Social amoeba), this protein is Probable cytochrome P450 508A1 (cyp508A1-1).